Here is a 247-residue protein sequence, read N- to C-terminus: NAD(P)H-quinone oxidoreductase subunit K (247 aa).

Cys63, Cys64, Cys128, and Cys159 together coordinate [4Fe-4S] cluster.

It belongs to the complex I 20 kDa subunit family. As to quaternary structure, NDH-1 can be composed of about 15 different subunits; different subcomplexes with different compositions have been identified which probably have different functions. It depends on [4Fe-4S] cluster as a cofactor.

The protein localises to the cellular thylakoid membrane. It catalyses the reaction a plastoquinone + NADH + (n+1) H(+)(in) = a plastoquinol + NAD(+) + n H(+)(out). The enzyme catalyses a plastoquinone + NADPH + (n+1) H(+)(in) = a plastoquinol + NADP(+) + n H(+)(out). In terms of biological role, NDH-1 shuttles electrons from an unknown electron donor, via FMN and iron-sulfur (Fe-S) centers, to quinones in the respiratory and/or the photosynthetic chain. The immediate electron acceptor for the enzyme in this species is believed to be plastoquinone. Couples the redox reaction to proton translocation, and thus conserves the redox energy in a proton gradient. Cyanobacterial NDH-1 also plays a role in inorganic carbon-concentration. The polypeptide is NAD(P)H-quinone oxidoreductase subunit K (Gloeothece citriformis (strain PCC 7424) (Cyanothece sp. (strain PCC 7424))).